The primary structure comprises 197 residues: Allatostatins (197 aa).

The N-terminal stretch at 1–27 (MRSRTSVLTSSLAFLYFFGIVGRSALA) is a signal peptide. A propeptide spanning residues 28–56 (MEETPASSMNLQHYNNMLNPMVFDDTMPE) is cleaved from the precursor. Ile-76 bears the Isoleucine amide mark. Positions 80–86 (WIDTNDN) are excised as a propeptide. Residues Leu-96, Leu-106, Leu-154, and Leu-184 each carry the leucine amide modification. A disordered region spans residues 161–197 (YSGGQPLGSKRPNDMLSQRYHFGLGKRMSEDEEESSQ). A propeptide spanning residues 188–197 (MSEDEEESSQ) is cleaved from the precursor.

Belongs to the allatostatin family.

Its subcellular location is the secreted. In terms of biological role, neuropeptides. In Apis mellifera (Honeybee), this protein is Allatostatins.